The following is a 256-amino-acid chain: Transcription factor BHLH094 (256 aa).

The interval 1–125 is disordered; that stretch reads MDPAPSLAAE…TPPEPPKQDY (125 aa). A compositionally biased stretch (basic and acidic residues) spans 79-97; that stretch reads PEAKRLKPMKSSDKNDSLR. The segment at 134–147 is basic motif; degenerate; that stretch reads QATDSHSLAERARR. In terms of domain architecture, bHLH spans 134–184; sequence QATDSHSLAERARREKISERMKILQDLVPGCNKVIGKASVLDEIINYIQSL. The segment at 148 to 184 is helix-loop-helix motif; it reads EKISERMKILQDLVPGCNKVIGKASVLDEIINYIQSL.

This sequence belongs to the bHLH protein family. Interacts with RSS3. Forms a ternary complex with RSS3 and TIFY11A/JAZ9 in the nucleus.

The protein localises to the nucleus. Transcription factor that forms a ternary complex with RSS3 and TIFY11A/JAZ9 to negatively regulate jasmonate-responsive genes. This chain is Transcription factor BHLH094, found in Oryza sativa subsp. japonica (Rice).